Here is a 419-residue protein sequence, read N- to C-terminus: UDP-N-acetylglucosamine 1-carboxyvinyltransferase 2 (419 aa).

24–25 (KN) serves as a coordination point for phosphoenolpyruvate. R94 contacts UDP-N-acetyl-alpha-D-glucosamine. The active-site Proton donor is the C118. Position 118 is a 2-(S-cysteinyl)pyruvic acid O-phosphothioketal (C118). Residues 123–127 (RPIDQ), D307, and I329 each bind UDP-N-acetyl-alpha-D-glucosamine.

It belongs to the EPSP synthase family. MurA subfamily.

The protein resides in the cytoplasm. The enzyme catalyses phosphoenolpyruvate + UDP-N-acetyl-alpha-D-glucosamine = UDP-N-acetyl-3-O-(1-carboxyvinyl)-alpha-D-glucosamine + phosphate. It participates in cell wall biogenesis; peptidoglycan biosynthesis. In terms of biological role, cell wall formation. Adds enolpyruvyl to UDP-N-acetylglucosamine. This Staphylococcus aureus (strain MRSA252) protein is UDP-N-acetylglucosamine 1-carboxyvinyltransferase 2.